The sequence spans 445 residues: 3-phosphoshikimate 1-carboxyvinyltransferase (445 aa).

Positions 25, 26, and 30 each coordinate 3-phosphoshikimate. Phosphoenolpyruvate is bound at residue Lys25. The phosphoenolpyruvate site is built by Gly98 and Arg126. Ser171, Gln173, Asp324, and Lys351 together coordinate 3-phosphoshikimate. Gln173 lines the phosphoenolpyruvate pocket. Asp324 functions as the Proton acceptor in the catalytic mechanism. Residues Arg355 and Arg398 each coordinate phosphoenolpyruvate.

The protein belongs to the EPSP synthase family. Monomer.

It is found in the cytoplasm. The enzyme catalyses 3-phosphoshikimate + phosphoenolpyruvate = 5-O-(1-carboxyvinyl)-3-phosphoshikimate + phosphate. Its pathway is metabolic intermediate biosynthesis; chorismate biosynthesis; chorismate from D-erythrose 4-phosphate and phosphoenolpyruvate: step 6/7. Functionally, catalyzes the transfer of the enolpyruvyl moiety of phosphoenolpyruvate (PEP) to the 5-hydroxyl of shikimate-3-phosphate (S3P) to produce enolpyruvyl shikimate-3-phosphate and inorganic phosphate. This Hydrogenovibrio crunogenus (strain DSM 25203 / XCL-2) (Thiomicrospira crunogena) protein is 3-phosphoshikimate 1-carboxyvinyltransferase.